The primary structure comprises 227 residues: Ribonuclease 3 (227 aa).

The region spanning 4–126 (LDRLERKIGY…IIGAMSLDQG (123 aa)) is the RNase III domain. Glutamate 39 is a Mg(2+) binding site. The active site involves aspartate 43. The Mg(2+) site is built by aspartate 112 and glutamate 115. Glutamate 115 is a catalytic residue. In terms of domain architecture, DRBM spans 153-226 (DAKTRLQEYL…AEQILKELDI (74 aa)).

The protein belongs to the ribonuclease III family. Homodimer. It depends on Mg(2+) as a cofactor.

Its subcellular location is the cytoplasm. It catalyses the reaction Endonucleolytic cleavage to 5'-phosphomonoester.. Functionally, digests double-stranded RNA. Involved in the processing of primary rRNA transcript to yield the immediate precursors to the large and small rRNAs (23S and 16S). Processes some mRNAs, and tRNAs when they are encoded in the rRNA operon. Processes pre-crRNA and tracrRNA of type II CRISPR loci if present in the organism. The protein is Ribonuclease 3 of Haemophilus influenzae (strain 86-028NP).